Consider the following 811-residue polypeptide: Glycerol-3-phosphate acyltransferase (811 aa).

Positions 308 to 313 (CHRSHM) match the HXXXXD motif motif.

Belongs to the GPAT/DAPAT family.

Its subcellular location is the cell inner membrane. The catalysed reaction is sn-glycerol 3-phosphate + an acyl-CoA = a 1-acyl-sn-glycero-3-phosphate + CoA. The protein operates within phospholipid metabolism; CDP-diacylglycerol biosynthesis; CDP-diacylglycerol from sn-glycerol 3-phosphate: step 1/3. The protein is Glycerol-3-phosphate acyltransferase of Pseudoalteromonas atlantica (strain T6c / ATCC BAA-1087).